The chain runs to 210 residues: Urease accessory protein UreF (210 aa).

It belongs to the UreF family. In terms of assembly, ureD, UreF and UreG form a complex that acts as a GTP-hydrolysis-dependent molecular chaperone, activating the urease apoprotein by helping to assemble the nickel containing metallocenter of UreC. The UreE protein probably delivers the nickel.

It localises to the cytoplasm. Functionally, required for maturation of urease via the functional incorporation of the urease nickel metallocenter. This is Urease accessory protein UreF from Dinoroseobacter shibae (strain DSM 16493 / NCIMB 14021 / DFL 12).